A 402-amino-acid polypeptide reads, in one-letter code: Odorant receptor 22c (402 aa).

The Cytoplasmic segment spans residues 1–42 (MTDSGQPAIADHFYRIPRISGLIVGLWPQRIRGGGGRPWHAH). The chain crosses the membrane as a helical span at residues 43–63 (LLFVFAFAMVVVGAVGEVSYG). The Extracellular segment spans residues 64-73 (CVHLDNLVVA). The chain crosses the membrane as a helical span at residues 74-94 (LEAFCPGTTKAVCVLKLWVFF). Residues 95–134 (RSNRRWAELVQRLRAILWESRRQEAQRMLVGLATTANRLS) lie on the Cytoplasmic side of the membrane. Residues 135–155 (LLLLSSGTATNAAFTLQPLIM) form a helical membrane-spanning segment. The Extracellular segment spans residues 156 to 173 (GLYRWIVQLPGQTELPFN). A helical membrane pass occupies residues 174-194 (IILPSFAVQPGVFPLTYVLLT). Topologically, residues 195-201 (ASGACTV) are cytoplasmic. The chain crosses the membrane as a helical span at residues 202–222 (FAFSFVDGFFICSCLYICGAF). Residues 223 to 276 (RLVQQDIRRIFADLHGDSVDVFTEEMNAEVRHRLAQVVERHNAIIDFCTDLTRQ) are Extracellular-facing. Residues 277 to 297 (FTVIVLMHFLSAAFVLCSTIL) traverse the membrane as a helical segment. The Cytoplasmic segment spans residues 298–307 (DIMLNTSSLS). Residues 308–328 (GLTYICYIIAALTQLFLYCFG) form a helical membrane-spanning segment. Residues 329-402 (GNHVSESSAA…SYITLLKTFL (74 aa)) are Extracellular-facing.

Belongs to the insect chemoreceptor superfamily. Heteromeric odorant receptor channel (TC 1.A.69) family. Or1a subfamily. As to quaternary structure, interacts with Orco. Complexes exist early in the endomembrane system in olfactory sensory neurons (OSNs), coupling these complexes to the conserved ciliary trafficking pathway. As to expression, not expressed in either the antenna or maxillary palp.

Its subcellular location is the cell membrane. Odorant receptor which mediates acceptance or avoidance behavior, depending on its substrates. The odorant receptor repertoire encodes a large collection of odor stimuli that vary widely in identity, intensity, and duration. May form a complex with Orco to form odorant-sensing units, providing sensitive and prolonged odorant signaling and calcium permeability. The sequence is that of Odorant receptor 22c (Or22c) from Drosophila melanogaster (Fruit fly).